Consider the following 80-residue polypeptide: RNA-binding protein Hfq (80 aa).

Positions 7 to 67 (ESFLNTARKK…ITTIVPHERL (61 aa)) constitute a Sm domain.

It belongs to the Hfq family. As to quaternary structure, homohexamer.

RNA chaperone that binds small regulatory RNA (sRNAs) and mRNAs to facilitate mRNA translational regulation in response to envelope stress, environmental stress and changes in metabolite concentrations. Also binds with high specificity to tRNAs. The polypeptide is RNA-binding protein Hfq (Aquifex aeolicus (strain VF5)).